The following is a 158-amino-acid chain: C-type lectin BfL-1 (158 aa).

A signal peptide spans 1-21 (MGHFTFIGLCLLAMFLSLSGA). 4 disulfide bridges follow: C26/C37, C54/C154, C61/C156, and C129/C146. One can recognise a C-type lectin domain in the interval 33–155 (KNGLCYKVFS…CAALRPFLCQ (123 aa)). Residues Q119, D121, and E127 each contribute to the Ca(2+) site. Residues 119-121 (QPD) carry the Galactose-binding motif. N134 carries N-linked (GlcNAc...) asparagine glycosylation. Positions 142 and 143 each coordinate Ca(2+).

It belongs to the true venom lectin family. Homodimer; non-covalently linked. In terms of tissue distribution, expressed by the venom gland.

The protein resides in the secreted. Its function is as follows. Galactose-binding lectin which recognizes specific carbohydrate structures and agglutinates a variety of animal cells by binding to cell-surface glycoproteins and glycolipids. May be a calcium-dependent lectin. This is C-type lectin BfL-1 from Bungarus fasciatus (Banded krait).